The primary structure comprises 486 residues: Cardiolipin synthase A (486 aa).

The next 2 membrane-spanning stretches (helical) occupy residues 3–23 and 38–58; these read TVYTLVSWLAILGYWLLIAGV and MAWLLIIYILPLVGIIAYLAV. PLD phosphodiesterase domains lie at 219–246 and 399–426; these read MDLRQHRKMIMIDNYIAYTGSMNMVDPR and EGGLLHTKSVLVDGELSLVGTVNLDMRS. Catalysis depends on residues histidine 224, lysine 226, aspartate 231, histidine 404, lysine 406, and aspartate 411.

Belongs to the phospholipase D family. Cardiolipin synthase subfamily. ClsA sub-subfamily.

Its subcellular location is the cell inner membrane. It carries out the reaction 2 a 1,2-diacyl-sn-glycero-3-phospho-(1'-sn-glycerol) = a cardiolipin + glycerol. Catalyzes the reversible phosphatidyl group transfer from one phosphatidylglycerol molecule to another to form cardiolipin (CL) (diphosphatidylglycerol) and glycerol. This Shigella dysenteriae serotype 1 (strain Sd197) protein is Cardiolipin synthase A.